Consider the following 806-residue polypeptide: Sperm head and tail associated protein (806 aa).

4 disordered regions span residues 1 to 36, 257 to 329, 428 to 496, and 707 to 806; these read MNSS…PSSC, TPAS…MSGS, LNNQ…CPQP, and SQIN…SKKK. A compositionally biased stretch (polar residues) spans 13–27; sequence APSTSPQADCPNNYS. Over residues 277–290 the composition is skewed to low complexity; it reads PPLSSASSPPSGNP. Positions 320–329 are enriched in polar residues; the sequence is LSSQAGMSGS. The segment at 521–806 is interaction with CRISP2; sequence KEPPPETAVL…QIKSPHSKKK (286 aa). 2 stretches are compositionally biased toward low complexity: residues 710 to 723 and 733 to 754; these read NHQN…KNSS and RRGA…SSTQ. Residues 773–788 show a composition bias toward polar residues; the sequence is QSQSPADGKIESQSKS.

Interacts with CRISP2. Isoforms 3 and 4 are expressed in testis (at protein level).

The protein resides in the cytoplasm. In terms of biological role, plays a role during spermatogenesis. This Mus musculus (Mouse) protein is Sperm head and tail associated protein (Nsun4).